The following is a 287-amino-acid chain: Survival motor neuron protein (287 aa).

Residues 1–28 are disordered; that stretch reads MGGGGGGFPEPEDSVLFRRGTGESDDSD. A P1 (binding site for GEMIN2) region spans residues 9-40; sequence PEPEDSVLFRRGTGESDDSDVWDDTALIKAYD. T21 is modified (phosphothreonine). 2 positions are modified to phosphoserine: S24 and S27. K47 participates in a covalent cross-link: Glycyl lysine isopeptide (Lys-Gly) (interchain with G-Cter in SUMO2). 2 disordered regions span residues 51–86 and 149–221; these read KNGD…PSKQ and NAQE…PPPH. Basic residues predominate over residues 64-77; that stretch reads GTPKRKSAKNKSQR. Residue T65 is modified to Phosphothreonine. T80 carries the phosphothreonine; by PKA modification. Positions 86-146 constitute a Tudor domain; sequence QWKVGDNCCA…LSPTSEVANI (61 aa). The segment at 92–204 is required for interaction with RPP20/POP7; sequence NCCAIWSEDG…MPRSGLGPGK (113 aa). Positions 149–160 are enriched in low complexity; it reads NAQENENESQIS. Positions 167-179 are enriched in polar residues; that stretch reads SSRSPLNKPNNIR. K204 is covalently cross-linked (Glycyl lysine isopeptide (Lys-Gly) (interchain with G-Cter in SUMO2)). The segment covering 211–221 has biased composition (pro residues); it reads GPPPPPPPPPH. A P2 (binding site for SM B) region spans residues 234–261; it reads PPMIPPPPPICPDSLDDADALGSMLISW. The required for interaction with SYNCRIP stretch occupies residues 273–287; that stretch reads GFKQSQKEGRYSHFN.

The protein belongs to the SMN family. Homooligomer; may form higher order homooligomers in the dimer to octamer range. Part of the core SMN complex that contains SMN1, GEMIN2/SIP1, DDX20/GEMIN3, GEMIN4, GEMIN5, GEMIN6, GEMIN7, GEMIN8 and STRAP/UNRIP. Part of the SMN-Sm complex that contains SMN1, GEMIN2/SIP1, DDX20/GEMIN3, GEMIN4, GEMIN5, GEMIN6, GEMIN7, GEMIN8, STRAP/UNRIP and the Sm proteins SNRPB, SNRPD1, SNRPD2, SNRPD3, SNRPE, SNRPF and SNRPG. Component of an import snRNP complex composed of KPNB1, RNUT1, SMN1 and ZNF259. Interacts with DDX20, FBL, NOLA1, RNUT1, SYNCRIP and with several spliceosomal snRNP core Sm proteins, including SNRPB, SNRPD1, SNRPD2, SNRPD3, SNRPE and ILF3. Interacts with GEMIN2; the interaction is direct. Interacts with GEMIN3; the interaction is direct. Interacts with GEMIN8; the interaction is direct. Interacts with SNRPB; the interaction is direct. Interacts (via Tudor domain) with SNRPD1 (via C-terminus); the interaction is direct. Interacts with SNRPD2; the interaction is direct. Interacts (via Tudor domain) with SNRPD3 (via C-terminus); the interaction is direct. Interacts with SNRPE; the interaction is direct. Interacts with OSTF1, LSM10, LSM11 and RPP20/POP7. Interacts (via C-terminal region) with ZPR1 (via C-terminal region). Interacts (via Tudor domain) with COIL. Interacts with SETX; recruits SETX to POLR2A. Interacts with POLR2A (via the C-terminal domain (CTD)). Interacts with PRMT5. Interacts with XRN2. Interacts (via C-terminus) with FMR1 (via C-terminus); the interaction is direct and occurs in a RNA-independent manner. Interacts (via Tudor domain) with SF3B2 ('Arg-508'-methylated form). Interacts with WRAP53/TCAB1. Interacts (via Tudor domain) with ELAVL4 in an RNA-independent manner; the interaction is required for localization of ELAVL4 to RNA granules. Interacts with FRG1.

It localises to the nucleus. It is found in the gem. The protein resides in the cajal body. The protein localises to the cytoplasm. Its subcellular location is the cytoplasmic granule. It localises to the perikaryon. It is found in the cell projection. The protein resides in the neuron projection. The protein localises to the axon. Its subcellular location is the myofibril. It localises to the sarcomere. It is found in the z line. The SMN complex catalyzes the assembly of small nuclear ribonucleoproteins (snRNPs), the building blocks of the spliceosome, and thereby plays an important role in the splicing of cellular pre-mRNAs. Most spliceosomal snRNPs contain a common set of Sm proteins SNRPB, SNRPD1, SNRPD2, SNRPD3, SNRPE, SNRPF and SNRPG that assemble in a heptameric protein ring on the Sm site of the small nuclear RNA to form the core snRNP (Sm core). In the cytosol, the Sm proteins SNRPD1, SNRPD2, SNRPE, SNRPF and SNRPG are trapped in an inactive 6S pICln-Sm complex by the chaperone CLNS1A that controls the assembly of the core snRNP. To assemble core snRNPs, the SMN complex accepts the trapped 5Sm proteins from CLNS1A forming an intermediate. Binding of snRNA inside 5Sm ultimately triggers eviction of the SMN complex, thereby allowing binding of SNRPD3 and SNRPB to complete assembly of the core snRNP. Within the SMN complex, SMN1 acts as a structural backbone and together with GEMIN2 it gathers the Sm complex subunits. Ensures the correct splicing of U12 intron-containing genes that may be important for normal motor and proprioceptive neurons development. Also required for resolving RNA-DNA hybrids created by RNA polymerase II, that form R-loop in transcription terminal regions, an important step in proper transcription termination. May also play a role in the metabolism of small nucleolar ribonucleoprotein (snoRNPs). This is Survival motor neuron protein (SMN1) from Bos taurus (Bovine).